The following is a 592-amino-acid chain: Testis-specific serine kinase substrate (592 aa).

Residue Ser217 is modified to Phosphoserine. A disordered region spans residues 232-308 (QDETPRRQEA…VPAGWGMGPR (77 aa)). Over residues 234-264 (ETPRRQEAELQEPEEKQEPEEKQEPEEKQKP) the composition is skewed to basic and acidic residues. Polar residues predominate over residues 269–281 (SWNSLGPAATSQG). Residue Ser288 is modified to Phosphoserine; by TSSK1 and TSSK2. Position 316 is a phosphoserine (Ser316). A disordered region spans residues 566-592 (LEGSTGTMGGGSSAGTPPKQGGSAPEQ).

Phosphorylated on serine residue(s) by STK22A/TSSK1 and STK22B/TSSK2. Highly expressed in testis. Expressed at low levels in prostate, female breast, placenta, ovary and thymus.

The protein resides in the cytoplasm. It localises to the cytoskeleton. The protein localises to the microtubule organizing center. It is found in the centrosome. Its subcellular location is the centriole. Its function is as follows. May play a role in testicular physiology, most probably in the process of spermatogenesis or spermatid development. This Homo sapiens (Human) protein is Testis-specific serine kinase substrate (TSKS).